Here is a 150-residue protein sequence, read N- to C-terminus: Submaxillary gland androgen-regulated protein 2, isoform alpha (150 aa).

A signal peptide spans 1–22 (MKALYMVFVLWVLIGCFLSGEC).

Its subcellular location is the secreted. Its function is as follows. May play a role in protection or detoxification. This chain is Submaxillary gland androgen-regulated protein 2, isoform alpha (Smr2), found in Mus musculus (Mouse).